The sequence spans 264 residues: Small ribosomal subunit protein uS2 (264 aa).

The segment at 233–264 (AQTQAGGKAEQEAPATEEAADAQTEEAATPAE) is disordered.

This sequence belongs to the universal ribosomal protein uS2 family.

This chain is Small ribosomal subunit protein uS2, found in Psychrobacter arcticus (strain DSM 17307 / VKM B-2377 / 273-4).